Here is a 303-residue protein sequence, read N- to C-terminus: Energy-coupling factor transporter ATP-binding protein EcfA2 (303 aa).

An ABC transporter domain is found at 17–260 (LSVSNLSCFF…EAFLAHTTII (244 aa)). Position 54–61 (54–61 (GDSGSGKS)) interacts with ATP.

It belongs to the ABC transporter superfamily. Energy-coupling factor EcfA family. As to quaternary structure, forms a stable energy-coupling factor (ECF) transporter complex composed of 2 membrane-embedded substrate-binding proteins (S component), 2 ATP-binding proteins (A component) and 2 transmembrane proteins (T component).

Its subcellular location is the cell membrane. Its function is as follows. ATP-binding (A) component of a common energy-coupling factor (ECF) ABC-transporter complex. Unlike classic ABC transporters this ECF transporter provides the energy necessary to transport a number of different substrates. This chain is Energy-coupling factor transporter ATP-binding protein EcfA2, found in Mycoplasma pneumoniae (strain ATCC 29342 / M129 / Subtype 1) (Mycoplasmoides pneumoniae).